Reading from the N-terminus, the 534-residue chain is MATKLDTSSLLLALLSKCSLLTQTNLALSLLVASLASLALSLFFWSHPGGPAWGKYFLHRRRQTTVIPGPRGLPFVGSMSLMSNTLAHRCIAATAEKFRAERLMAFSLGETRVIVTCNPDVAKEILNSPVFADRPVKESAYSLMFNRAIGFAPYGVYWRTLRKIASNHLFSPKQIKRSETQRSVIANQIVKCLTKQSNTKGLCFARDLIKTASLNNMMCSVFGKEYELEEEHEEVSELRELVEEGYDLLGTLNWTDHLPWLSEFDPQRIRSRCSNLVPKVNRFVNRIISDHREQTRDSPSDFVDVLLSLDGPDKLSDPDIIAVLWEMIFRGTDTVAVLIEWILARMVLHPDIQSTVHNELDQIVGRSRAVEESDVVSLVYLTAVVKEVLRLHPPGPLLSWARLAITDTIIDGRRVPAGTTAMVNMWAIAHDPHVWENPLEFKPERFVAKEGEVEFSVLGSDLRLAPFGSGRRVCPGKNLGLTTVTFWTATLLHEFEWLTPSDEKTVDLSEKLRLSCEMANPLAAKLRPRRSFSV.

A helical membrane pass occupies residues 26–46 (LALSLLVASLASLALSLFFWS). Position 474 (Cys474) interacts with heme.

It belongs to the cytochrome P450 family. It depends on heme as a cofactor. In terms of tissue distribution, expressed in the funiculus of developing ovules.

The protein resides in the membrane. Plays a role in seed and fruit development. Functions probably in association with CYP78A6 in the regulation of seed growth. This chain is Cytochrome P450 78A9 (CYP78A9), found in Arabidopsis thaliana (Mouse-ear cress).